The following is a 245-amino-acid chain: Orotidine 5'-phosphate decarboxylase (245 aa).

Residues Asp22, Lys44, 71–80 (DLKFHDIPNT), Thr131, Arg192, Gln201, Gly221, and Arg222 each bind substrate. Lys73 (proton donor) is an active-site residue.

It belongs to the OMP decarboxylase family. Type 1 subfamily. Homodimer.

The catalysed reaction is orotidine 5'-phosphate + H(+) = UMP + CO2. Its pathway is pyrimidine metabolism; UMP biosynthesis via de novo pathway; UMP from orotate: step 2/2. Its function is as follows. Catalyzes the decarboxylation of orotidine 5'-monophosphate (OMP) to uridine 5'-monophosphate (UMP). The chain is Orotidine 5'-phosphate decarboxylase from Yersinia pseudotuberculosis serotype O:3 (strain YPIII).